The following is a 549-amino-acid chain: Beta-mannosyltransferase 3 (549 aa).

Residues 1–37 (MFESDLSFYSALLILCCPISIVFFKKFPIKGYTGANK) lie on the Cytoplasmic side of the membrane. The helical transmembrane segment at 38–58 (VSLFLQCLIAILNLNILYSFI) threads the bilayer. At 59–549 (NSLTITLGHD…DTMGWDKLSR (491 aa)) the chain is on the extracellular side.

It belongs to the BMT family.

The protein localises to the membrane. Its function is as follows. Beta-mannosyltransferase involved in cell wall biosynthesis. Required for addition of the second beta-mannose residue to acid-stable fraction of cell wall phosphopeptidomannan, and in elongation of beta-mannose chains on the phosphopeptidomannan acid-labile fraction. This chain is Beta-mannosyltransferase 3 (BMT3), found in Candida albicans (strain SC5314 / ATCC MYA-2876) (Yeast).